The sequence spans 164 residues: Heat shock protein beta-6 (164 aa).

The involved in stabilization of the HSPB1:HSBP6 heterodimer stretch occupies residues 1–72 (MEIPVSVQPS…PTAQVSTDPG (72 aa)). At Ser-16 the chain carries Phosphoserine. Residues 56–163 (RAPSVALPTA…PLQSPPGAAA (108 aa)) enclose the sHSP domain. At Gln-66 the chain carries Deamidated glutamine. The residue at position 157 (Ser-157) is a Phosphoserine.

Belongs to the small heat shock protein (HSP20) family. Homodimer. Small heat shock proteins form high molecular mass oligomers containing variable number of monomers; these oligomers display a very flexible quaternary structure easily exchanging their subunits. Heterooligomer with HSPB1; formed through oligomerization of HSPB1:HSBP6 dimers; subunit exchange leads to formation of at least two different heterooligomeric complexes, differing in variable quantities of HSPB1 and HSPB6 homodimers in addition to HSPB1:HSPB6 heterodimers. Heterooligomer with CRYAB; large heterooligomers consist of CRYAB homodimers and HSPB5:HSPB6 heterodimers but lacking HSPB6 homodimers. Interacts with BAG3. Interacts (phosphorylated) with YWHAZ. Interacts with PDE4A and PDE4D; required for maintenance of the non-phosphorylated state of HSPB6 under basal conditions. Interacts with KDR. Interacts with PRKD1. In terms of processing, phosphorylated at Ser-16 by PKA and probably PKD1K; required to protect cardiomyocytes from apoptosis.

The protein localises to the cytoplasm. Its subcellular location is the nucleus. It is found in the secreted. Its function is as follows. Small heat shock protein which functions as a molecular chaperone probably maintaining denatured proteins in a folding-competent state. Seems to have versatile functions in various biological processes. Plays a role in regulating muscle function such as smooth muscle vasorelaxation and cardiac myocyte contractility. May regulate myocardial angiogenesis implicating KDR. Overexpression mediates cardioprotection and angiogenesis after induced damage. Stabilizes monomeric YWHAZ thereby supporting YWHAZ chaperone-like activity. This Bos taurus (Bovine) protein is Heat shock protein beta-6 (HSPB6).